The primary structure comprises 342 residues: N-acetyl-gamma-glutamyl-phosphate reductase (342 aa).

Cys-149 is an active-site residue.

Belongs to the NAGSA dehydrogenase family. Type 1 subfamily.

It is found in the cytoplasm. It carries out the reaction N-acetyl-L-glutamate 5-semialdehyde + phosphate + NADP(+) = N-acetyl-L-glutamyl 5-phosphate + NADPH + H(+). The protein operates within amino-acid biosynthesis; L-arginine biosynthesis; N(2)-acetyl-L-ornithine from L-glutamate: step 3/4. Functionally, catalyzes the NADPH-dependent reduction of N-acetyl-5-glutamyl phosphate to yield N-acetyl-L-glutamate 5-semialdehyde. This is N-acetyl-gamma-glutamyl-phosphate reductase from Cereibacter sphaeroides (strain ATCC 17023 / DSM 158 / JCM 6121 / CCUG 31486 / LMG 2827 / NBRC 12203 / NCIMB 8253 / ATH 2.4.1.) (Rhodobacter sphaeroides).